A 583-amino-acid chain; its full sequence is 5-aminolevulinate synthase, erythroid-specific, mitochondrial (583 aa).

Arginine 158 lines the succinyl-CoA pocket. Residues cysteine 253 and phenylalanine 254 each coordinate pyridoxal 5'-phosphate. Succinyl-CoA contacts are provided by serine 275 and arginine 294. Pyridoxal 5'-phosphate is bound by residues serine 327, histidine 355, and threonine 383. The active site involves lysine 386. Lysine 386 carries the post-translational modification N6-(pyridoxal phosphate)lysine. Pyridoxal 5'-phosphate-binding residues include threonine 415 and threonine 416. Threonine 503 provides a ligand contact to succinyl-CoA.

The protein belongs to the class-II pyridoxal-phosphate-dependent aminotransferase family. Homodimer. The cofactor is pyridoxal 5'-phosphate.

It is found in the mitochondrion inner membrane. It catalyses the reaction succinyl-CoA + glycine + H(+) = 5-aminolevulinate + CO2 + CoA. It participates in porphyrin-containing compound metabolism; protoporphyrin-IX biosynthesis; 5-aminolevulinate from glycine: step 1/1. Its function is as follows. Catalyzes the pyridoxal 5'-phosphate (PLP)-dependent condensation of succinyl-CoA and glycine to form aminolevulinic acid (ALA), with CoA and CO2 as by-products. Contributes significantly to heme formation during erythropoiesis. The sequence is that of 5-aminolevulinate synthase, erythroid-specific, mitochondrial (alas2) from Danio rerio (Zebrafish).